The sequence spans 583 residues: Bifunctional dihydrofolate reductase-thymidylate synthase (583 aa).

A DHFR domain is found at 9 to 229 (DIYAICACCK…TTLDFVIYSK (221 aa)). 36 to 42 (GLGNEGG) is an NADP(+) binding site. A substrate-binding site is contributed by Asp51. NADP(+) contacts are provided by residues 104–106 (KAS) and 125–128 (LSRT). Substrate-binding residues include Ile165, Tyr171, and Thr186. 166–173 (GGASVYKE) contributes to the NADP(+) binding site. The tract at residues 298–583 (HPEYQYLNII…HDKISMDMAA (286 aa)) is thymidylate synthase. Arg320 serves as a coordination point for dUMP. The active site involves Cys465. DUMP contacts are provided by residues His466, 484-488 (QRSCD), Asn496, and 526-528 (HVY).

It in the N-terminal section; belongs to the dihydrofolate reductase family. This sequence in the C-terminal section; belongs to the thymidylate synthase family. In terms of assembly, homodimer.

The enzyme catalyses (6S)-5,6,7,8-tetrahydrofolate + NADP(+) = 7,8-dihydrofolate + NADPH + H(+). It catalyses the reaction dUMP + (6R)-5,10-methylene-5,6,7,8-tetrahydrofolate = 7,8-dihydrofolate + dTMP. It functions in the pathway cofactor biosynthesis; tetrahydrofolate biosynthesis; 5,6,7,8-tetrahydrofolate from 7,8-dihydrofolate: step 1/1. Functionally, bifunctional enzyme. Involved in de novo dTMP biosynthesis. Key enzyme in folate metabolism. Catalyzes an essential reaction for de novo glycine and purine synthesis, DNA precursor synthesis, and for the conversion of dUMP to dTMP. The protein is Bifunctional dihydrofolate reductase-thymidylate synthase of Plasmodium chabaudi.